Here is a 383-residue protein sequence, read N- to C-terminus: Ovalbumin (383 aa).

G2 is modified (N-acetylglycine). A signal peptide (not cleaved) is located at residues 22 to 48; sequence HHANDNMLYSPFAILSTLAMVFLGAKD. Position 69 is a phosphoserine (S69). An intrachain disulfide couples C74 to C121. N-linked (GlcNAc...) asparagine glycans are attached at residues N293 and N312. A Phosphoserine modification is found at S345.

It belongs to the serpin family. Ov-serpin subfamily. The signal sequence is not cleaved. The functional signal for membrane translocation of ovalbumin becomes accessible when the nascent chain is 50 to 60 residues long. The hydrophobic sequence which lies between residues 27 and 43 folds back on the preceding residues to form an amphipathic hairpin structure which is the signal element recognized by the membrane. As to expression, major protein of egg white.

Its subcellular location is the secreted. Its function is as follows. Storage protein of egg white. Lack protease inhibitory activity. This is Ovalbumin (SERPINB14) from Coturnix japonica (Japanese quail).